Here is an 80-residue protein sequence, read N- to C-terminus: Large ribosomal subunit protein uL29 (80 aa).

The protein belongs to the universal ribosomal protein uL29 family.

The chain is Large ribosomal subunit protein uL29 from Saccharopolyspora erythraea (strain ATCC 11635 / DSM 40517 / JCM 4748 / NBRC 13426 / NCIMB 8594 / NRRL 2338).